The primary structure comprises 172 residues: R-phycocyanin beta subunit (172 aa).

Position 72 is an N4-methylasparagine (asparagine 72). Cysteine 82 is a (2R,3E)-phycocyanobilin binding site. A (2R,3E)-phycoerythrobilin-binding site is contributed by cysteine 153.

It belongs to the phycobiliprotein family. As to quaternary structure, heterodimer of an alpha and a beta subunit, which further assembles into trimers and the trimers into hexamers. Post-translationally, contains two covalently linked bilin chromophores.

It localises to the cellular thylakoid membrane. Functionally, light-harvesting photosynthetic bile pigment-protein from the phycobiliprotein complex (phycobilisome, PBS). Phycocyanin is the major phycobiliprotein in the PBS rod. This is R-phycocyanin beta subunit (rpcB) from Synechococcus sp. (strain WH7803).